The primary structure comprises 155 residues: D-aminoacyl-tRNA deacylase (155 aa).

Residues Gly137–Pro138 carry the Gly-cisPro motif, important for rejection of L-amino acids motif.

This sequence belongs to the DTD family. As to quaternary structure, homodimer.

It is found in the cytoplasm. It carries out the reaction glycyl-tRNA(Ala) + H2O = tRNA(Ala) + glycine + H(+). It catalyses the reaction a D-aminoacyl-tRNA + H2O = a tRNA + a D-alpha-amino acid + H(+). An aminoacyl-tRNA editing enzyme that deacylates mischarged D-aminoacyl-tRNAs. Also deacylates mischarged glycyl-tRNA(Ala), protecting cells against glycine mischarging by AlaRS. Acts via tRNA-based rather than protein-based catalysis; rejects L-amino acids rather than detecting D-amino acids in the active site. By recycling D-aminoacyl-tRNA to D-amino acids and free tRNA molecules, this enzyme counteracts the toxicity associated with the formation of D-aminoacyl-tRNA entities in vivo and helps enforce protein L-homochirality. This chain is D-aminoacyl-tRNA deacylase, found in Geotalea uraniireducens (strain Rf4) (Geobacter uraniireducens).